Reading from the N-terminus, the 159-residue chain is Putative ribosomal RNA large subunit methyltransferase H (159 aa).

S-adenosyl-L-methionine-binding positions include Leu76, Gly108, and 127–132 (LSPLTF).

This sequence belongs to the RNA methyltransferase RlmH family.

The protein localises to the cytoplasm. The enzyme catalyses pseudouridine(1915) in 23S rRNA + S-adenosyl-L-methionine = N(3)-methylpseudouridine(1915) in 23S rRNA + S-adenosyl-L-homocysteine + H(+). Specifically methylates the pseudouridine at position 1915 (m3Psi1915) in 23S rRNA. In Methanoregula boonei (strain DSM 21154 / JCM 14090 / 6A8), this protein is Putative ribosomal RNA large subunit methyltransferase H.